The primary structure comprises 236 residues: Exotoxin type H (236 aa).

An N-terminal signal peptide occupies residues 1-32; the sequence is MRYNCRYSHIDKKIYSMIICLSFLLYSNVVQA.

This sequence belongs to the staphylococcal/streptococcal toxin family.

It is found in the secreted. Its function is as follows. Mitogenic for human peripheral blood lymphocytes. This Streptococcus pyogenes serotype M1 protein is Exotoxin type H (speH).